The sequence spans 330 residues: Ferredoxin--NADP reductase (330 aa).

Glu-35, Gln-43, Tyr-48, Val-90, Phe-123, Asp-285, and Thr-326 together coordinate FAD.

The protein belongs to the ferredoxin--NADP reductase type 2 family. In terms of assembly, homodimer. FAD is required as a cofactor.

It carries out the reaction 2 reduced [2Fe-2S]-[ferredoxin] + NADP(+) + H(+) = 2 oxidized [2Fe-2S]-[ferredoxin] + NADPH. This Streptococcus agalactiae serotype Ia (strain ATCC 27591 / A909 / CDC SS700) protein is Ferredoxin--NADP reductase.